Reading from the N-terminus, the 342-residue chain is Tetraacyldisaccharide 4'-kinase (342 aa).

68–75 provides a ligand contact to ATP; that stretch reads TVGGTGKT.

The protein belongs to the LpxK family.

The enzyme catalyses a lipid A disaccharide + ATP = a lipid IVA + ADP + H(+). Its pathway is glycolipid biosynthesis; lipid IV(A) biosynthesis; lipid IV(A) from (3R)-3-hydroxytetradecanoyl-[acyl-carrier-protein] and UDP-N-acetyl-alpha-D-glucosamine: step 6/6. Its function is as follows. Transfers the gamma-phosphate of ATP to the 4'-position of a tetraacyldisaccharide 1-phosphate intermediate (termed DS-1-P) to form tetraacyldisaccharide 1,4'-bis-phosphate (lipid IVA). This is Tetraacyldisaccharide 4'-kinase from Burkholderia pseudomallei (strain K96243).